Here is a 287-residue protein sequence, read N- to C-terminus: MNLQTMVDTLQEAAQEAEAIQEEMNEKIERLKAELVVFKGLMSDPMTDLDTKIQEKAMKVDMDICRRIDITAKLCDVAQQRNSEDVSKIFQVVPKKKDRKVASDDDISEQDGEVNRFSDEEVGSMNITDEMKRMFNQLRETFDFDDDCDSLTWEENEDTLLLWEDFTNCNPTIDLQGEQEENLGNLIHETESFFKTRDKEYQETIGQIELELATAKSDMNRHLHEYMEMCSMKRGLDVQMETCRRLIKGSADRNSPSPSSVASSDSGSTDEIQDDLEREADVEPMVS.

In terms of domain architecture, IF rod spans 1-254 (MNLQTMVDTL…RLIKGSADRN (254 aa)). The tract at residues 248 to 287 (KGSADRNSPSPSSVASSDSGSTDEIQDDLEREADVEPMVS) is disordered. Positions 255–267 (SPSPSSVASSDSG) are enriched in low complexity. Over residues 271–287 (EIQDDLEREADVEPMVS) the composition is skewed to acidic residues.

Belongs to the intermediate filament family.

This is Intermediate filament family orphan 2 (Iffo2) from Rattus norvegicus (Rat).